Reading from the N-terminus, the 248-residue chain is Protein G1-like6 (248 aa).

Over residues 1–15 (MDRHHHHHHHHHHHM) the composition is skewed to basic residues. 3 disordered regions span residues 1 to 35 (MDRH…GATQ), 50 to 84 (GAGS…YESQ), and 198 to 248 (ARGI…FIIP). The segment covering 17–32 (SGGGQDPAAGDGGAGG) has biased composition (gly residues). Low complexity predominate over residues 50–59 (GAGSSSSGAG). Over residues 60-69 (TSAGGGGGGP) the composition is skewed to gly residues. Residues 70-79 (SPSSSSPSLS) show a composition bias toward low complexity. The region spanning 80-207 (RYESQKRRDW…ARGISYEKKK (128 aa)) is the ALOG domain. The Nuclear localization signal motif lies at 205-209 (KKKRK). Low complexity-rich tracts occupy residues 212-224 (SSAG…SSEG) and 239-248 (TSASPQFIIP).

It belongs to the plant homeotic and developmental regulators ALOG protein family.

The protein localises to the nucleus. Its function is as follows. Probable transcription regulator that acts as a developmental regulator by promoting cell growth in response to light. The polypeptide is Protein G1-like6 (Oryza sativa subsp. indica (Rice)).